A 477-amino-acid polypeptide reads, in one-letter code: Transposase for insertion sequence element IS231F (477 aa).

It belongs to the transposase 11 family.

Functionally, involved in the transposition of the insertion sequence. The sequence is that of Transposase for insertion sequence element IS231F from Bacillus thuringiensis subsp. israelensis.